Reading from the N-terminus, the 98-residue chain is Large ribosomal subunit protein bL25 (98 aa).

Residues 1–23 are disordered; sequence MANFVLNAQARAEDKQGKGASRR.

This sequence belongs to the bacterial ribosomal protein bL25 family. As to quaternary structure, part of the 50S ribosomal subunit; part of the 5S rRNA/L5/L18/L25 subcomplex. Contacts the 5S rRNA. Binds to the 5S rRNA independently of L5 and L18.

Functionally, this is one of the proteins that binds to the 5S RNA in the ribosome where it forms part of the central protuberance. This Acinetobacter baumannii (strain ATCC 17978 / DSM 105126 / CIP 53.77 / LMG 1025 / NCDC KC755 / 5377) protein is Large ribosomal subunit protein bL25.